The following is a 436-amino-acid chain: MALPTIAIVGRPNVGKSTLFNRIAGERISIVEDVEGVTRDRIYATADWLNRKFSIIDTGGIDDVDAPFMEQIKHQAEIAMDEADVIVFVVSGKEGITDADEYVARMLYKTHKPIILAVNKVDNPEMRNEIFDFYALGLGDPFPVSSVHGIGTGDVLDAIVENLPNEEVAENPDMIKFSLIGRPNVGKSSLINAILGEERVIASPVAGTTRDAIDTVFTDSEGQEFTMIDTAGMRKSGKVYENTEKYSVMRAMRAIDRSDVVLMVLNAEEGIREYDKRIAGFAHEAGKGIVIVVNKWDTLEKDNHTMKDWEADIRDQFQYLSYAPIIFVSALTKQRLHKLPDMIKQISQSQNTRIPSAVLNDVIMDAIAINPTPTDKGKRLKIFYATQVATKPPTFVIFVNEEELMHFSYLRFLENQIRKAFVFEGTPIHLIARKRK.

EngA-type G domains follow at residues 4–167 and 175–351; these read PTIA…PNEE and IKFS…QSQN. Residues 10 to 17, 57 to 61, 119 to 122, 181 to 188, 229 to 233, and 294 to 297 each bind GTP; these read GRPNVGKS, DTGGI, NKVD, DTAGM, and NKWD. The KH-like domain occupies 352–436; the sequence is TRIPSAVLND…PIHLIARKRK (85 aa).

This sequence belongs to the TRAFAC class TrmE-Era-EngA-EngB-Septin-like GTPase superfamily. EngA (Der) GTPase family. In terms of assembly, associates with the 50S ribosomal subunit.

GTPase that plays an essential role in the late steps of ribosome biogenesis. The protein is GTPase Der of Streptococcus gordonii (strain Challis / ATCC 35105 / BCRC 15272 / CH1 / DL1 / V288).